The chain runs to 702 residues: Polyribonucleotide nucleotidyltransferase (702 aa).

2 residues coordinate Mg(2+): D486 and D492. Residues P553–I612 form the KH domain. Positions D622 to K690 constitute an S1 motif domain.

The protein belongs to the polyribonucleotide nucleotidyltransferase family. Component of the RNA degradosome, which is a multiprotein complex involved in RNA processing and mRNA degradation. The cofactor is Mg(2+).

The protein resides in the cytoplasm. It catalyses the reaction RNA(n+1) + phosphate = RNA(n) + a ribonucleoside 5'-diphosphate. Its function is as follows. Involved in mRNA degradation. Catalyzes the phosphorolysis of single-stranded polyribonucleotides processively in the 3'- to 5'-direction. The protein is Polyribonucleotide nucleotidyltransferase of Marinomonas sp. (strain MWYL1).